A 495-amino-acid chain; its full sequence is UDP-N-acetylmuramate--L-alanine ligase (495 aa).

ATP is bound at residue 122 to 128; the sequence is GTHGKTT.

Belongs to the MurCDEF family.

It localises to the cytoplasm. It catalyses the reaction UDP-N-acetyl-alpha-D-muramate + L-alanine + ATP = UDP-N-acetyl-alpha-D-muramoyl-L-alanine + ADP + phosphate + H(+). It participates in cell wall biogenesis; peptidoglycan biosynthesis. Cell wall formation. The sequence is that of UDP-N-acetylmuramate--L-alanine ligase from Mycobacterium leprae (strain TN).